We begin with the raw amino-acid sequence, 418 residues long: Probable carboxypeptidase AFLA_000940 (418 aa).

An N-terminal signal peptide occupies residues 1-18 (MKATDLFHVTVLVAGALA). A glycan (N-linked (GlcNAc...) asparagine) is linked at Asn-74. Residue Asp-147 coordinates Zn(2+). An N-linked (GlcNAc...) asparagine glycan is attached at Asn-168. Residue Glu-179 is the Proton acceptor of the active site. Zn(2+) is bound at residue Glu-180.

It belongs to the peptidase M20A family. It depends on Zn(2+) as a cofactor.

The protein resides in the secreted. The sequence is that of Probable carboxypeptidase AFLA_000940 from Aspergillus flavus (strain ATCC 200026 / FGSC A1120 / IAM 13836 / NRRL 3357 / JCM 12722 / SRRC 167).